The chain runs to 418 residues: Putative methylthiotransferase HP_0285 (418 aa).

The MTTase N-terminal domain maps to K2–R110. [4Fe-4S] cluster-binding residues include C11, C45, C74, C144, C148, and C151. The Radical SAM core domain occupies F130 to A355.

This sequence belongs to the methylthiotransferase family. [4Fe-4S] cluster is required as a cofactor.

The protein is Putative methylthiotransferase HP_0285 of Helicobacter pylori (strain ATCC 700392 / 26695) (Campylobacter pylori).